The following is an 80-amino-acid chain: RNA-binding protein Hfq (80 aa).

The Sm domain maps to 10-70 (DIFLNNARKE…ISTVSPAKPI (61 aa)).

This sequence belongs to the Hfq family. Homohexamer.

Its function is as follows. RNA chaperone that binds small regulatory RNA (sRNAs) and mRNAs to facilitate mRNA translational regulation in response to envelope stress, environmental stress and changes in metabolite concentrations. Also binds with high specificity to tRNAs. The polypeptide is RNA-binding protein Hfq (Clostridium perfringens (strain SM101 / Type A)).